A 559-amino-acid chain; its full sequence is Formate--tetrahydrofolate ligase (559 aa).

68 to 75 (TPAGEGKT) serves as a coordination point for ATP.

It belongs to the formate--tetrahydrofolate ligase family. Homotetramer.

It carries out the reaction (6S)-5,6,7,8-tetrahydrofolate + formate + ATP = (6R)-10-formyltetrahydrofolate + ADP + phosphate. The protein operates within one-carbon metabolism; tetrahydrofolate interconversion. The polypeptide is Formate--tetrahydrofolate ligase (Moorella thermoacetica (Clostridium thermoaceticum)).